We begin with the raw amino-acid sequence, 141 residues long: Transcription antitermination protein NusB (141 aa).

Belongs to the NusB family.

Functionally, involved in transcription antitermination. Required for transcription of ribosomal RNA (rRNA) genes. Binds specifically to the boxA antiterminator sequence of the ribosomal RNA (rrn) operons. This chain is Transcription antitermination protein NusB, found in Treponema pallidum (strain Nichols).